The chain runs to 250 residues: Cell division protein ZapD (250 aa).

The protein belongs to the ZapD family. Interacts with FtsZ.

Its subcellular location is the cytoplasm. Its function is as follows. Cell division factor that enhances FtsZ-ring assembly. Directly interacts with FtsZ and promotes bundling of FtsZ protofilaments, with a reduction in FtsZ GTPase activity. This chain is Cell division protein ZapD, found in Yersinia pestis bv. Antiqua (strain Antiqua).